The following is a 382-amino-acid chain: Elloramycin glycosyltransferase ElmGT (382 aa).

It belongs to the glycosyltransferase 28 family.

It carries out the reaction 8-demethyltetracenomycin C + dTDP-beta-L-rhamnose = 8-demethyl-8-alpha-L-rhamnosyl-tetracenomycin C + dTDP + H(+). Its pathway is antibiotic biosynthesis. In terms of biological role, glycosyltransferase that transfers an L-rhamnose moiety from dTDP-L-rhamnose to the elloramycin aglycone 8-demethyl-tetracenomycin C (8DMTC) in elloramycin biosynthesis, an antitumor polyketide. Possesses donor substrate flexibility: able to transfer at least 11 different sugars to 8DMTC, such as NDP-D-glucose, as well as NDP-L-digitoxose, including both L- and D-isomeric forms of some sugars. The chain is Elloramycin glycosyltransferase ElmGT from Streptomyces olivaceus.